The chain runs to 529 residues: Glutamyl-tRNA(Gln) amidotransferase subunit B-2, chloroplastic/mitochondrial (529 aa).

Positions 17–61 (STRVSLPRGSIPPPPTSSSSSSSSSREGRRPRFFSTTTTSAERPV) are disordered.

This sequence belongs to the GatB/GatE family. GatB subfamily. Subunit of the heterotrimeric GatCAB amidotransferase (AdT) complex, composed of A, B and C subunits.

It is found in the mitochondrion. The protein resides in the plastid. The protein localises to the chloroplast. It carries out the reaction L-glutamyl-tRNA(Gln) + L-glutamine + ATP + H2O = L-glutaminyl-tRNA(Gln) + L-glutamate + ADP + phosphate + H(+). Allows the formation of correctly charged Gln-tRNA(Gln) through the transamidation of misacylated Glu-tRNA(Gln) in chloroplasts and mitochondria. The reaction takes place in the presence of glutamine and ATP through an activated gamma-phospho-Glu-tRNA(Gln). The protein is Glutamyl-tRNA(Gln) amidotransferase subunit B-2, chloroplastic/mitochondrial of Micromonas commoda (strain RCC299 / NOUM17 / CCMP2709) (Picoplanktonic green alga).